The following is a 347-amino-acid chain: Biotin synthase (347 aa).

The region spanning 40–258 (AQVQVSTLLS…IAVARIAMPR (219 aa)) is the Radical SAM core domain. Residues Cys-55, Cys-59, and Cys-62 each coordinate [4Fe-4S] cluster. Cys-99, Cys-130, Cys-190, and Arg-262 together coordinate [2Fe-2S] cluster.

The protein belongs to the radical SAM superfamily. Biotin synthase family. Homodimer. [4Fe-4S] cluster serves as cofactor. It depends on [2Fe-2S] cluster as a cofactor.

The enzyme catalyses (4R,5S)-dethiobiotin + (sulfur carrier)-SH + 2 reduced [2Fe-2S]-[ferredoxin] + 2 S-adenosyl-L-methionine = (sulfur carrier)-H + biotin + 2 5'-deoxyadenosine + 2 L-methionine + 2 oxidized [2Fe-2S]-[ferredoxin]. Its pathway is cofactor biosynthesis; biotin biosynthesis; biotin from 7,8-diaminononanoate: step 2/2. Functionally, catalyzes the conversion of dethiobiotin (DTB) to biotin by the insertion of a sulfur atom into dethiobiotin via a radical-based mechanism. The protein is Biotin synthase of Stenotrophomonas maltophilia (strain K279a).